The sequence spans 339 residues: Dihydroorotate dehydrogenase (quinone) (339 aa).

Residues 64-68 (AGADK) and Thr88 each bind FMN. Residue Lys68 participates in substrate binding. 113-117 (NRNGF) provides a ligand contact to substrate. FMN-binding residues include Asn141 and Asn174. Substrate is bound at residue Asn174. Residue Ser177 is the Nucleophile of the active site. Asn179 contacts substrate. Residues Lys219 and Thr247 each contribute to the FMN site. Position 248 to 249 (248 to 249 (NT)) interacts with substrate. Residues Gly270, Gly299, and 320 to 321 (YS) each bind FMN.

This sequence belongs to the dihydroorotate dehydrogenase family. Type 2 subfamily. In terms of assembly, monomer. It depends on FMN as a cofactor.

The protein resides in the cell membrane. The catalysed reaction is (S)-dihydroorotate + a quinone = orotate + a quinol. It functions in the pathway pyrimidine metabolism; UMP biosynthesis via de novo pathway; orotate from (S)-dihydroorotate (quinone route): step 1/1. Catalyzes the conversion of dihydroorotate to orotate with quinone as electron acceptor. The sequence is that of Dihydroorotate dehydrogenase (quinone) (pyrD) from Haemophilus influenzae (strain ATCC 51907 / DSM 11121 / KW20 / Rd).